A 193-amino-acid chain; its full sequence is dTTP/UTP pyrophosphatase (193 aa).

Aspartate 71 serves as the catalytic Proton acceptor.

It belongs to the Maf family. YhdE subfamily. The cofactor is a divalent metal cation.

The protein resides in the cytoplasm. The enzyme catalyses dTTP + H2O = dTMP + diphosphate + H(+). It carries out the reaction UTP + H2O = UMP + diphosphate + H(+). Its function is as follows. Nucleoside triphosphate pyrophosphatase that hydrolyzes dTTP and UTP. May have a dual role in cell division arrest and in preventing the incorporation of modified nucleotides into cellular nucleic acids. The protein is dTTP/UTP pyrophosphatase of Geobacter sp. (strain M21).